A 550-amino-acid polypeptide reads, in one-letter code: Selinene synthase (550 aa).

The Mg(2+) site is built by Asp-314, Asp-318, Asp-450, and Glu-458. The DDXXD motif motif lies at 314–318 (DDIYD).

The protein belongs to the terpene synthase family. Requires Mg(2+) as cofactor. The cofactor is Mn(2+).

The catalysed reaction is (2E,6E)-farnesyl diphosphate = (+)-beta-selinene + diphosphate. It carries out the reaction (2E,6E)-farnesyl diphosphate = alpha-selinene + diphosphate. Its pathway is secondary metabolite biosynthesis; terpenoid biosynthesis. In terms of biological role, sesquiterpene synthase that catalyzes the formation of alpha- and beta-selinene from trans,trans-farnesyl diphosphate (FPP). Also produces some nerolidol. This chain is Selinene synthase (SES), found in Ocimum basilicum (Sweet basil).